Reading from the N-terminus, the 294-residue chain is Homeobox protein HD1 (294 aa).

Positions 197–217 constitute an ELK domain; that stretch reads ELKLELKQGFKSRIEDVREEI. A DNA-binding region (homeobox; TALE-type) is located at residues 218–281; the sequence is MRKRRAGKLP…NQRKRNWHNN (64 aa).

The protein belongs to the TALE/KNOX homeobox family. As to expression, in roots, stems and cotyledons of one-week old seedlings. In mature plants, in young leaves from first level below flowers as well as in flower buds and open flowers.

It is found in the nucleus. In terms of biological role, possible developmental regulator. The sequence is that of Homeobox protein HD1 (HD1) from Brassica napus (Rape).